We begin with the raw amino-acid sequence, 932 residues long: MLKGDPSEKTKKRYQARVDAVNALGARTKALSDDELRAKTEEFRERLRRGESEDDLLVEAFAVVREAADRVLGLRPFDVQLIGGMILHEGQIAEMRTGEGKTLVSALPAYLNALSGKGVHVVTVNDYLARRDAEWIGQIHKFLGMTCGLIQAGMAEEERRVGYGSDVTYVTNSELGFDYLRDNLAQNTGELVQRDFNFCIIDEVDSILIDEARTPLIISGVADKPSERYIQAAKIADAFEKDYHYKVDEKQKSVLLSEEGYEAAEDLLQVTDLYDPRTQWALYIINAIKAKELQKRDVNYIVRGQEIIIVDEFSGRTMQGRRWSDGLHQAVEAKEGVTIQNETVTIASVTYQAFFKSYPKLGGMTGTAETEITEFSNIYELEVAVVPTNRPVSREDSTDVVFRSETGKWNAVRKEISRMHKKGRPVLVGTTSVERSEQIAELLDEDGIPYELLNAKPENVERESEIVAQSGRKGAVTIATNMAGRGTDILLGGNAEFMARLRVRESLMQRVVMPEDGEIAFEKKGNLAKSGGNKWAVKEGLYPCELSAETAKMLGEAVDTACSVWGDRSLEALDAEERLSFACEKGPSEDEAILALRKVFNAIEAEYKVYTSAEKKEVLGLGGLHVVGTERHESRRVDNQLRGRSGRQGDPGSTRYFLSLEDNLFRIFGGDRIQALMSAFRVEDMPIESGMLTNSLDEAQKKVERYFYDIRKQLFDYDAVLNSQREKVYFERRRALTASREQLQEQMLEYAELTIDDIVNANIDTSEPVSEWPLEGLVGKLRQYCYYFGEIDESDIRPIAEKGGVNALRNFLVKKGQDAYMTKCGEVEATEAGLMMEAERFFILSQTDNLWKQHLQAIKFVQQAVGLRGYAQKDPLIEYKLEGFNLYTEMMAQIRRNVIYSVYMFQPQRLEQKEEAELVGAGGDQKPNSRKK.

An ATP-binding site is contributed by 95-102 (MRTGEGKT). Basic and acidic residues predominate over residues 632–641 (HESRRVDNQL). Residues 632 to 653 (HESRRVDNQLRGRSGRQGDPGS) form a disordered region.

The protein belongs to the SecA family.

It localises to the plastid. The protein localises to the chloroplast stroma. The protein resides in the chloroplast thylakoid membrane. It carries out the reaction ATP + H2O + chloroplast-proteinSide 1 = ADP + phosphate + chloroplast-proteinSide 2.. Its function is as follows. Has a central role in coupling the hydrolysis of ATP to the transfer of proteins across the thylakoid membrane. The sequence is that of Protein translocase subunit SecA, chloroplastic from Ostreococcus lucimarinus (strain CCE9901).